The sequence spans 548 residues: CTP synthase (548 aa).

The interval 1–265 (MTRYIFVTGG…DDIICDKLRI (265 aa)) is amidoligase domain. Position 13 (S13) interacts with CTP. S13 is a UTP binding site. Residues 14–19 (SLGKGI) and D71 contribute to the ATP site. Positions 71 and 139 each coordinate Mg(2+). CTP contacts are provided by residues 146–148 (DIE), 186–191 (KTKPTQ), and K222. UTP contacts are provided by residues 186–191 (KTKPTQ) and K222. A Glutamine amidotransferase type-1 domain is found at 290 to 541 (NIAMVGKYME…VNAALAYKAA (252 aa)). Position 351 (G351) interacts with L-glutamine. C378 (nucleophile; for glutamine hydrolysis) is an active-site residue. Residues 379 to 382 (LGMQ), E402, and R469 contribute to the L-glutamine site. Residues H514 and E516 contribute to the active site.

Belongs to the CTP synthase family. As to quaternary structure, homotetramer.

It catalyses the reaction UTP + L-glutamine + ATP + H2O = CTP + L-glutamate + ADP + phosphate + 2 H(+). The catalysed reaction is L-glutamine + H2O = L-glutamate + NH4(+). The enzyme catalyses UTP + NH4(+) + ATP = CTP + ADP + phosphate + 2 H(+). It participates in pyrimidine metabolism; CTP biosynthesis via de novo pathway; CTP from UDP: step 2/2. Allosterically activated by GTP, when glutamine is the substrate; GTP has no effect on the reaction when ammonia is the substrate. The allosteric effector GTP functions by stabilizing the protein conformation that binds the tetrahedral intermediate(s) formed during glutamine hydrolysis. Inhibited by the product CTP, via allosteric rather than competitive inhibition. In terms of biological role, catalyzes the ATP-dependent amination of UTP to CTP with either L-glutamine or ammonia as the source of nitrogen. Regulates intracellular CTP levels through interactions with the four ribonucleotide triphosphates. The sequence is that of CTP synthase from Chromohalobacter salexigens (strain ATCC BAA-138 / DSM 3043 / CIP 106854 / NCIMB 13768 / 1H11).